We begin with the raw amino-acid sequence, 328 residues long: Tetraacyldisaccharide 4'-kinase (328 aa).

55 to 62 (TAGGNGKT) contributes to the ATP binding site.

This sequence belongs to the LpxK family.

The catalysed reaction is a lipid A disaccharide + ATP = a lipid IVA + ADP + H(+). It functions in the pathway glycolipid biosynthesis; lipid IV(A) biosynthesis; lipid IV(A) from (3R)-3-hydroxytetradecanoyl-[acyl-carrier-protein] and UDP-N-acetyl-alpha-D-glucosamine: step 6/6. Its function is as follows. Transfers the gamma-phosphate of ATP to the 4'-position of a tetraacyldisaccharide 1-phosphate intermediate (termed DS-1-P) to form tetraacyldisaccharide 1,4'-bis-phosphate (lipid IVA). The chain is Tetraacyldisaccharide 4'-kinase from Escherichia coli O6:K15:H31 (strain 536 / UPEC).